The chain runs to 216 residues: Large ribosomal subunit protein uL3 (216 aa).

The disordered stretch occupies residues 135–156; the sequence is LGASHGTQRKHRSPGSIGGCAT.

The protein belongs to the universal ribosomal protein uL3 family. Part of the 50S ribosomal subunit. Forms a cluster with proteins L14 and L19.

Its function is as follows. One of the primary rRNA binding proteins, it binds directly near the 3'-end of the 23S rRNA, where it nucleates assembly of the 50S subunit. The polypeptide is Large ribosomal subunit protein uL3 (Thermobifida fusca (strain YX)).